Here is a 207-residue protein sequence, read N- to C-terminus: Ciliary microtubule-associated protein 3 (207 aa).

In terms of assembly, interacts with proteins involved in ciliary transport, including ARL13B, CETN1, KIF3A, RAB6A, RAB8A, TUBB1 and TUBG1. Interacts with AURKA. Expressed in tissues rich in ciliated cells, such as lung, kidney, vas deferens and testis. Both isoforms 1 and 2 are expressed in testis.

It localises to the golgi apparatus. The protein localises to the golgi stack. Its subcellular location is the trans-Golgi network. It is found in the nucleus. The protein resides in the cytoplasm. It localises to the cytoplasmic vesicle. Its function is as follows. During primary cilia disassembly, involved in cilia disassembly. Required specifically to control cilia retraction as well as the liberation and duplication of the basal body/centrosome. May act by stimulating AURKA activity at the basal body in a cell cycle-dependent manner. The sequence is that of Ciliary microtubule-associated protein 3 (Cimap3) from Mus musculus (Mouse).